Reading from the N-terminus, the 109-residue chain is Small ribosomal subunit protein uS17A (109 aa).

This sequence belongs to the universal ribosomal protein uS17 family. Part of the 30S ribosomal subunit.

One of the primary rRNA binding proteins, it binds specifically to the 5'-end of 16S ribosomal RNA. The polypeptide is Small ribosomal subunit protein uS17A (Methanosarcina acetivorans (strain ATCC 35395 / DSM 2834 / JCM 12185 / C2A)).